A 208-amino-acid polypeptide reads, in one-letter code: Thymidylate kinase (208 aa).

7-14 (GIDGAGKT) provides a ligand contact to ATP.

It belongs to the thymidylate kinase family.

It catalyses the reaction dTMP + ATP = dTDP + ADP. Functionally, phosphorylation of dTMP to form dTDP in both de novo and salvage pathways of dTTP synthesis. The chain is Thymidylate kinase (tmk) from Xylella fastidiosa (strain 9a5c).